We begin with the raw amino-acid sequence, 142 residues long: Large ribosomal subunit protein uL11 (142 aa).

Belongs to the universal ribosomal protein uL11 family. In terms of assembly, part of the ribosomal stalk of the 50S ribosomal subunit. Interacts with L10 and the large rRNA to form the base of the stalk. L10 forms an elongated spine to which L12 dimers bind in a sequential fashion forming a multimeric L10(L12)X complex. One or more lysine residues are methylated.

Functionally, forms part of the ribosomal stalk which helps the ribosome interact with GTP-bound translation factors. The polypeptide is Large ribosomal subunit protein uL11 (Yersinia pseudotuberculosis serotype O:1b (strain IP 31758)).